Here is a 419-residue protein sequence, read N- to C-terminus: Protein farnesyltransferase subunit beta (419 aa).

PFTB repeat units follow at residues 68-109 (EDNT…ITLG), 119-160 (RNKL…SVLN), 167-208 (IKNV…ILIG), 215-256 (LPRL…ALLQ), and 329-371 (SIAL…SLCQ). (2E,6E)-farnesyl diphosphate-binding positions include 193 to 196 (HGGY) and 235 to 238 (RTNK). Zn(2+) is bound by residues aspartate 241 and cysteine 243. 244–247 (YSFW) is a binding site for (2E,6E)-farnesyl diphosphate. Histidine 359 is a binding site for Zn(2+).

The protein belongs to the protein prenyltransferase subunit beta family. In terms of assembly, heterodimer of FTA and FTB. Zn(2+) is required as a cofactor.

It catalyses the reaction L-cysteinyl-[protein] + (2E,6E)-farnesyl diphosphate = S-(2E,6E)-farnesyl-L-cysteinyl-[protein] + diphosphate. Functionally, catalyzes the transfer of a farnesyl moiety from farnesyl diphosphate to a cysteine at the fourth position from the C-terminus of several proteins. The beta subunit FTB is responsible for peptide-binding. The polypeptide is Protein farnesyltransferase subunit beta (FTB) (Pisum sativum (Garden pea)).